We begin with the raw amino-acid sequence, 355 residues long: UDP-N-acetylglucosamine--N-acetylmuramyl-(pentapeptide) pyrophosphoryl-undecaprenol N-acetylglucosamine transferase (355 aa).

UDP-N-acetyl-alpha-D-glucosamine-binding positions include 15–17 (TGG), Asn127, Arg163, Ser191, Ile244, 263–268 (ALTVSE), and Gln288.

Belongs to the glycosyltransferase 28 family. MurG subfamily.

Its subcellular location is the cell inner membrane. The enzyme catalyses di-trans,octa-cis-undecaprenyl diphospho-N-acetyl-alpha-D-muramoyl-L-alanyl-D-glutamyl-meso-2,6-diaminopimeloyl-D-alanyl-D-alanine + UDP-N-acetyl-alpha-D-glucosamine = di-trans,octa-cis-undecaprenyl diphospho-[N-acetyl-alpha-D-glucosaminyl-(1-&gt;4)]-N-acetyl-alpha-D-muramoyl-L-alanyl-D-glutamyl-meso-2,6-diaminopimeloyl-D-alanyl-D-alanine + UDP + H(+). The protein operates within cell wall biogenesis; peptidoglycan biosynthesis. In terms of biological role, cell wall formation. Catalyzes the transfer of a GlcNAc subunit on undecaprenyl-pyrophosphoryl-MurNAc-pentapeptide (lipid intermediate I) to form undecaprenyl-pyrophosphoryl-MurNAc-(pentapeptide)GlcNAc (lipid intermediate II). This is UDP-N-acetylglucosamine--N-acetylmuramyl-(pentapeptide) pyrophosphoryl-undecaprenol N-acetylglucosamine transferase from Salmonella newport (strain SL254).